A 155-amino-acid polypeptide reads, in one-letter code: Ribosome maturation factor RimP (155 aa).

The protein belongs to the RimP family.

The protein localises to the cytoplasm. Its function is as follows. Required for maturation of 30S ribosomal subunits. In Lachnoclostridium phytofermentans (strain ATCC 700394 / DSM 18823 / ISDg) (Clostridium phytofermentans), this protein is Ribosome maturation factor RimP.